The primary structure comprises 200 residues: Large ribosomal subunit protein bL25 (200 aa).

Disordered regions lie at residues 1–20 and 179–200; these read MTIEFNATKREGQGSSASRR and PVVASAQTTRGAAAAEGEGEAA.

It belongs to the bacterial ribosomal protein bL25 family. CTC subfamily. In terms of assembly, part of the 50S ribosomal subunit; part of the 5S rRNA/L5/L18/L25 subcomplex. Contacts the 5S rRNA. Binds to the 5S rRNA independently of L5 and L18.

Functionally, this is one of the proteins that binds to the 5S RNA in the ribosome where it forms part of the central protuberance. The chain is Large ribosomal subunit protein bL25 from Azoarcus sp. (strain BH72).